Here is a 93-residue protein sequence, read N- to C-terminus: Small ribosomal subunit protein uS19 (93 aa).

Belongs to the universal ribosomal protein uS19 family.

In terms of biological role, protein S19 forms a complex with S13 that binds strongly to the 16S ribosomal RNA. The protein is Small ribosomal subunit protein uS19 of Rubrobacter xylanophilus (strain DSM 9941 / JCM 11954 / NBRC 16129 / PRD-1).